We begin with the raw amino-acid sequence, 190 residues long: Probable RNA-binding protein 18 (190 aa).

Residues 25-106 (HRLWIGNLDP…KKLVVRWAHA (82 aa)) form the RRM domain. Residues 166–190 (VYSYFKPPDKKRTTPYSRTAWKSRR) form a disordered region.

The chain is Probable RNA-binding protein 18 (RBM18) from Pongo abelii (Sumatran orangutan).